Here is a 313-residue protein sequence, read N- to C-terminus: Secreted mono- and diacylglycerol lipase MDL5 (313 aa).

The N-terminal stretch at 1-20 (MQLQYVLTLLWIIFAQNVFS) is a signal peptide. Cysteines 66 and 306 form a disulfide. Asn72 and Asn111 each carry an N-linked (GlcNAc...) asparagine glycan. Ser180 (nucleophile) is an active-site residue. The active site involves Asp238. The N-linked (GlcNAc...) asparagine glycan is linked to Asn263. His290 is a catalytic residue.

It belongs to the AB hydrolase superfamily. Lipase family. Class 3 subfamily.

The protein localises to the secreted. It localises to the cell wall. The catalysed reaction is a monoacylglycerol + H2O = glycerol + a fatty acid + H(+). It carries out the reaction a diacylglycerol + H2O = a monoacylglycerol + a fatty acid + H(+). Secreted lipase involved in Dandruff and seborrheic dermatitis (D/SD) probably via lipase-mediated breakdown of sebaceous lipids and release of irritating free fatty acids. Shows activity against monoglyceride and diglyceride substrates, but not triglyceride substrates and does not exhibit regio-selective production of diacylglycerols. Cleaves oleic acid from 1,2 isomers of diolein on both the 1 and the 2 position of the glycerol backbone, resulting mainly in free fatty acids but no monoolein is detected. Shows activity on monoolein and liberates mostly free fatty acids, but can also perform the reverse reaction and produce diolein. The polypeptide is Secreted mono- and diacylglycerol lipase MDL5 (Malassezia globosa (strain ATCC MYA-4612 / CBS 7966) (Dandruff-associated fungus)).